A 109-amino-acid polypeptide reads, in one-letter code: MSGGNDSVLHRPVEAPLMEDGELSAVFTIRNSSGIHVRPAGTIVKLFEGEECEATLTYLGKTVNARSVMSILMLGASYNGEVAVHIKGPSASRVMQKLSEVFNSGFGEL.

One can recognise an HPr domain in the interval 22–109 (ELSAVFTIRN…EVFNSGFGEL (88 aa)). His36 serves as the catalytic Pros-phosphohistidine intermediate.

The protein belongs to the HPr family.

It is found in the cytoplasm. General (non sugar-specific) component of the phosphoenolpyruvate-dependent sugar phosphotransferase system (sugar PTS). This major carbohydrate active-transport system catalyzes the phosphorylation of incoming sugar substrates concomitantly with their translocation across the cell membrane. The phosphoryl group from phosphoenolpyruvate (PEP) is transferred to the phosphoryl carrier protein HPr by enzyme I. Phospho-HPr then transfers it to the PTS EIIA domain. This Chlamydia trachomatis serovar D (strain ATCC VR-885 / DSM 19411 / UW-3/Cx) protein is Phosphocarrier protein HPr (ptsH).